The following is a 736-amino-acid chain: Subtilisin-like protease SBT4.12 (736 aa).

The first 24 residues, Met1 to Ala24, serve as a signal peptide directing secretion. Residues Ile25–His110 constitute a propeptide, activation peptide. One can recognise an Inhibitor I9 domain in the interval Val32–His110. Positions Ser114–Leu580 constitute a Peptidase S8 domain. Catalysis depends on Asp142, which acts as the Charge relay system. An N-linked (GlcNAc...) asparagine glycan is attached at Asn173. His197 serves as the catalytic Charge relay system. N-linked (GlcNAc...) asparagine glycosylation is found at Asn220, Asn381, and Asn459. Residues Lys353–Leu437 form the PA domain. Ser519 functions as the Charge relay system in the catalytic mechanism. Residues Asn601, Asn649, and Asn659 are each glycosylated (N-linked (GlcNAc...) asparagine).

It belongs to the peptidase S8 family. Post-translationally, the C-terminal propeptide is autocleaved. In terms of tissue distribution, specifically expressed in root stele of the root hair zone.

The protein resides in the secreted. This chain is Subtilisin-like protease SBT4.12, found in Arabidopsis thaliana (Mouse-ear cress).